Reading from the N-terminus, the 85-residue chain is V-type proton ATPase subunit f (85 aa).

Residues 1–10 (MRPVVSTGKA) are Lumenal-facing. The chain crosses the membrane as a helical span at residues 11 to 31 (WCCTVLSAFGVVILSVIAHLF). At 32–54 (NTNHESFVGSINDPEDGPAVAHT) the chain is on the cytoplasmic side. The chain crosses the membrane as a helical span at residues 55–75 (VYLAALVYLVFFVFCGFQVYL). At 76–85 (ARRKPSIELR) the chain is on the lumenal side.

As to quaternary structure, V-ATPase is a heteromultimeric enzyme composed of a peripheral catalytic V1 complex (components A to H) attached to an integral membrane V0 proton pore complex (components: a, c, c', c'', d, e, f and VOA1).

The protein resides in the endoplasmic reticulum membrane. The protein localises to the vacuole membrane. Functionally, accessory component of the V0 complex of vacuolar(H+)-ATPase (V-ATPase), a multisubunit enzyme composed of a peripheral complex (V1) that hydrolyzes ATP and a membrane integral complex (V0) that translocates protons. V-ATPase is responsible for acidifying and maintaining the pH of intracellular compartments. The sequence is that of V-type proton ATPase subunit f from Saccharomyces cerevisiae (strain ATCC 204508 / S288c) (Baker's yeast).